The chain runs to 263 residues: MRILLTNDDGIHAPGLQALEKIARALSDDVWICAPEYEQSGASRALTLADPIRVRKLDSRRFAVEGTPTDCVMMAVQHLIEGGRPDLVLSGVNRGQNIAEDVTLSGTVAGAIEGMAMGIPSIALSQSMNYFHDEIVAHWETAEAFAPGIIQRLLEVGWPADVVMNVNFPALPPESVKAVEVTRQGFRDGHMRHMDKRTDLRGRDYYWMGFTAKASQPAEGTDLRAVYEGRISVTPLHIDLTHNETVHTLKGVLGGAPPRKVGA.

The a divalent metal cation site is built by aspartate 8, aspartate 9, serine 40, and asparagine 93.

It belongs to the SurE nucleotidase family. It depends on a divalent metal cation as a cofactor.

Its subcellular location is the cytoplasm. It catalyses the reaction a ribonucleoside 5'-phosphate + H2O = a ribonucleoside + phosphate. Its function is as follows. Nucleotidase that shows phosphatase activity on nucleoside 5'-monophosphates. This is 5'-nucleotidase SurE from Caulobacter vibrioides (strain ATCC 19089 / CIP 103742 / CB 15) (Caulobacter crescentus).